Here is a 353-residue protein sequence, read N- to C-terminus: Phosphoribosylformylglycinamidine cyclo-ligase (353 aa).

It belongs to the AIR synthase family.

Its subcellular location is the cytoplasm. It carries out the reaction 2-formamido-N(1)-(5-O-phospho-beta-D-ribosyl)acetamidine + ATP = 5-amino-1-(5-phospho-beta-D-ribosyl)imidazole + ADP + phosphate + H(+). Its pathway is purine metabolism; IMP biosynthesis via de novo pathway; 5-amino-1-(5-phospho-D-ribosyl)imidazole from N(2)-formyl-N(1)-(5-phospho-D-ribosyl)glycinamide: step 2/2. The chain is Phosphoribosylformylglycinamidine cyclo-ligase from Methylocella silvestris (strain DSM 15510 / CIP 108128 / LMG 27833 / NCIMB 13906 / BL2).